We begin with the raw amino-acid sequence, 74 residues long: UPF0435 protein GK0418 (74 aa).

Belongs to the UPF0435 family.

This chain is UPF0435 protein GK0418, found in Geobacillus kaustophilus (strain HTA426).